Consider the following 108-residue polypeptide: FK506-binding protein 1 (108 aa).

In terms of domain architecture, PPIase FKBP-type spans 20–108 (GDNVTIHYVG…KFEVELLKVN (89 aa)).

It belongs to the FKBP-type PPIase family. FKBP1 subfamily.

It is found in the cytoplasm. It carries out the reaction [protein]-peptidylproline (omega=180) = [protein]-peptidylproline (omega=0). Inhibited by both FK506 and rapamycin. Functionally, PPIases accelerate the folding of proteins. It catalyzes the cis-trans isomerization of proline imidic peptide bonds in oligopeptides. This Cryptococcus neoformans var. grubii serotype A (strain H99 / ATCC 208821 / CBS 10515 / FGSC 9487) (Filobasidiella neoformans var. grubii) protein is FK506-binding protein 1 (FRR1).